Here is a 185-residue protein sequence, read N- to C-terminus: MNVIRTEIEDVLILEPRVFGDDRGFFYESFNQSAFEHILGYPVSFVQDNHSRSSKNVLRGLHFQRGEYAQDKLVRCTHGAVFDVAVDIRPNSVSFGKWVGVLLSADNKQQLWIPKGFAHGFLVLSDIAEFQYKTTNYYHPESDCGICWNDERIAIDWPQTSGLILSPKDERLFTLDELIRLKLIA.

Substrate-binding positions include Arg23, Glu28, 47 to 49 (QDN), and Arg59. The active-site Proton acceptor is His62. Residues Lys72 and His119 each coordinate substrate. The Proton donor role is filled by Tyr132. Substrate is bound by residues Asp143 and Lys168.

Belongs to the dTDP-4-dehydrorhamnose 3,5-epimerase family. As to quaternary structure, homodimer.

The catalysed reaction is dTDP-4-dehydro-6-deoxy-alpha-D-glucose = dTDP-4-dehydro-beta-L-rhamnose. Its pathway is carbohydrate biosynthesis; dTDP-L-rhamnose biosynthesis. It participates in bacterial outer membrane biogenesis; LPS O-antigen biosynthesis. Its function is as follows. Catalyzes the epimerization of the C3' and C5'positions of dTDP-6-deoxy-D-xylo-4-hexulose, forming dTDP-6-deoxy-L-lyxo-4-hexulose. This chain is dTDP-4-dehydrorhamnose 3,5-epimerase (rfbC), found in Escherichia coli (strain K12).